The sequence spans 45 residues: FKBP-type peptidyl-prolyl cis-trans isomerase, chloroplastic (45 aa).

It belongs to the FKBP-type PPIase family. Expressed in leaves, but not in roots.

The protein resides in the plastid. It is found in the chloroplast thylakoid lumen. It catalyses the reaction [protein]-peptidylproline (omega=180) = [protein]-peptidylproline (omega=0). In terms of biological role, PPIases accelerate the folding of proteins. It catalyzes the cis-trans isomerization of proline imidic peptide bonds in oligopeptides. The sequence is that of FKBP-type peptidyl-prolyl cis-trans isomerase, chloroplastic from Vicia faba (Broad bean).